An 864-amino-acid chain; its full sequence is Paramyosin (864 aa).

Residues 1 to 30 form a nonhelical region region; it reads MSSLYRDLDSDVSSTRIVRHSYNVYRGSSP. The stretch at 31–853 forms a coiled coil; the sequence is SSQNRLESRI…QTVRRSRSMS (823 aa). The segment at 854 to 864 is nonhelical region; it reads VSREVTRVVRV.

Belongs to the paramyosin family. Homodimer. In terms of processing, phosphorylated. Most abundantly expressed in muscle tissues from byssus retractor and adductor muscles. Low expression in foot, gill, inner mantle and outer mantle.

Its subcellular location is the cytoplasm. It is found in the myofibril. Functionally, paramyosin is a major structural component of many thick filaments isolated from invertebrate muscles. The sequence is that of Paramyosin from Mytilus galloprovincialis (Mediterranean mussel).